The chain runs to 142 residues: Hemoglobin subunit alpha-A (142 aa).

Residues 2–142 (VLSAADKTNV…VGTVLTAKYR (141 aa)) enclose the Globin domain. His59 provides a ligand contact to O2. Residue His88 coordinates heme b.

It belongs to the globin family. As to quaternary structure, heterotetramer of two alpha chains and two beta chains. Red blood cells.

Its function is as follows. Involved in oxygen transport from the lung to the various peripheral tissues. This is Hemoglobin subunit alpha-A (HBAA) from Coturnix japonica (Japanese quail).